Here is a 411-residue protein sequence, read N- to C-terminus: Putative polysaccharide ligase RC0486 (411 aa).

Transmembrane regions (helical) follow at residues 15-35 (LGML…LISF), 78-98 (GITM…IHLI), 101-121 (LATF…SNSA), 133-153 (LIFG…SNGF), 166-186 (MLDR…IILL), 207-227 (ISDS…FILT), 233-253 (IFFK…PVIA), 328-348 (ILQI…CLVY), 361-381 (NFKA…MISY), and 383-403 (IWQI…KLLV).

It belongs to the O-antigen ligase family.

The protein localises to the membrane. This chain is Putative polysaccharide ligase RC0486, found in Rickettsia conorii (strain ATCC VR-613 / Malish 7).